A 333-amino-acid polypeptide reads, in one-letter code: Probable siderophore transport system permease protein YfiZ (333 aa).

An N-terminal signal peptide occupies residues 1–31; the sequence is MICKKASSKWIVLVCLIFILLTAVCASVVYG. 8 consecutive transmembrane segments (helical) span residues 64-84, 94-114, 119-139, 152-172, 193-213, 246-266, 280-300, and 303-323; these read ALVATVVGASLAAAGALMQAL, IFGINAGAGFFIVAGSFFLHI, ALVWSSFLGAAFTAAIVYAAG, TLAGAAMAAMFSSLTQGLLSV, LDLLMTMFPYAAAALVICFFL, VMLAGSAVAIAGPISFIGIII, WVLPFSAVLGAILLVCADIGA, and IIMPQEVPVGVMTAIIGMPVF.

Belongs to the binding-protein-dependent transport system permease family. FecCD subfamily. The complex is composed of one ATP-binding protein (YusV), two transmembrane proteins (YfiZ and YfhA) and a solute-binding protein (YfiY).

The protein resides in the cell membrane. In terms of biological role, part of the ABC transporter complex YfiYZ/YfhA/YusV involved in import of the iron-hydroxamate siderophores schizokinen, arthrobactin and corprogen. The protein is Probable siderophore transport system permease protein YfiZ (yfiZ) of Bacillus subtilis (strain 168).